We begin with the raw amino-acid sequence, 130 residues long: Small ribosomal subunit protein uS8 (130 aa).

It belongs to the universal ribosomal protein uS8 family. As to quaternary structure, part of the 30S ribosomal subunit. Contacts proteins S5 and S12.

Its function is as follows. One of the primary rRNA binding proteins, it binds directly to 16S rRNA central domain where it helps coordinate assembly of the platform of the 30S subunit. This is Small ribosomal subunit protein uS8 from Pseudomonas fluorescens (strain ATCC BAA-477 / NRRL B-23932 / Pf-5).